The following is a 271-amino-acid chain: Autophagy-related protein 27 (271 aa).

An N-terminal signal peptide occupies residues 1–19; sequence MVSKTWICGFISIITVVQA. Residues 20 to 166 form the MRH domain; the sequence is LSCEKHDVLK…TLKGPSGCLK (147 aa). At 20 to 199 the chain is on the lumenal side; it reads LSCEKHDVLK…PAKKAGGTSW (180 aa). Cystine bridges form between C22–C60, C71–C78, and C135–C164. The disordered stretch occupies residues 161–194; it reads PSGCLKSKDDDKKNGDGDNGKDGDSEGKKPAKKA. Residues 166-189 are compositionally biased toward basic and acidic residues; sequence KSKDDDKKNGDGDNGKDGDSEGKK. Residues 200–220 traverse the membrane as a helical segment; sequence FTWLFLYALLFTLIYLMVVSF. Over 221–271 the chain is Cytoplasmic; that stretch reads LNTRGGSFQDFRAEFIQRSTQFLTSLPEFCKEVVSRILGRSTAQRGGYSAV.

Belongs to the ATG27 family. As to quaternary structure, forms a complex with ATG9 and ATG23.

The protein localises to the cytoplasmic vesicle membrane. The protein resides in the golgi apparatus membrane. It is found in the mitochondrion membrane. It localises to the preautophagosomal structure membrane. Functionally, effector of VPS34 phosphatidylinositol 3-phosphate kinase signaling. Regulates the cytoplasm to vacuole transport (Cvt) vesicle formation. Plays a role in ATG protein retrieval from the pre-autophagosomal structure (PAS) and is especially required for autophagy-dependent cycling of ATG9. This chain is Autophagy-related protein 27 (ATG27), found in Saccharomyces cerevisiae (strain ATCC 204508 / S288c) (Baker's yeast).